Reading from the N-terminus, the 510-residue chain is Pyruvate kinase, cytosolic isozyme (510 aa).

Arginine 50 is a binding site for substrate. Residues asparagine 52, serine 54, aspartate 84, and threonine 85 each coordinate K(+). 52 to 55 serves as a coordination point for ATP; the sequence is NFSH. ATP is bound by residues arginine 91 and lysine 176. Mg(2+) is bound at residue glutamate 242. Substrate contacts are provided by glycine 265, aspartate 266, and threonine 298. Aspartate 266 contributes to the Mg(2+) binding site.

It belongs to the pyruvate kinase family. In terms of assembly, homotetramer. Requires Mg(2+) as cofactor. K(+) is required as a cofactor.

Its subcellular location is the cytoplasm. The catalysed reaction is pyruvate + ATP = phosphoenolpyruvate + ADP + H(+). Its pathway is carbohydrate degradation; glycolysis; pyruvate from D-glyceraldehyde 3-phosphate: step 5/5. The chain is Pyruvate kinase, cytosolic isozyme from Solanum tuberosum (Potato).